Reading from the N-terminus, the 445-residue chain is Ubiquitin carboxyl-terminal hydrolase 11 (445 aa).

A USP domain is found at 1–412 (NSARADLCVA…AAYVLFYQRQ (412 aa)). Residues 127 to 194 (RPSSDDEDDG…GPSHWPQRAR (68 aa)) are disordered. Position 130 is a phosphoserine (Ser-130). A compositionally biased stretch (acidic residues) spans 131-140 (DDEDDGDEKD). The Nucleophile role is filled by His-362. His-370 (proton acceptor) is an active-site residue. Residues 416–445 (RRLQPQPSSSDPPASPACGSPPNSEFMDVN) form a disordered region. Over residues 420-439 (PQPSSSDPPASPACGSPPNS) the composition is skewed to low complexity. Ser-430 is modified (phosphoserine).

Belongs to the peptidase C19 family. Monomer. Interacts with RANBP9/RANBPM. Interacts with BRCA2. Interacts with CHUK/IKKA. Interacts with NFKBIA. Associated component of the Polycomb group (PcG) multiprotein PRC1-like complex.

The protein resides in the nucleus. It is found in the cytoplasm. The protein localises to the chromosome. It carries out the reaction Thiol-dependent hydrolysis of ester, thioester, amide, peptide and isopeptide bonds formed by the C-terminal Gly of ubiquitin (a 76-residue protein attached to proteins as an intracellular targeting signal).. Protease that can remove conjugated ubiquitin from target proteins and polyubiquitin chains. Inhibits the degradation of target proteins by the proteasome. Cleaves preferentially 'Lys-6' and 'Lys-63'-linked ubiquitin chains. Has lower activity with 'Lys-11' and 'Lys-33'-linked ubiquitin chains, and extremely low activity with 'Lys-27', 'Lys-29' and 'Lys-48'-linked ubiquitin chains (in vitro). Plays a role in the regulation of pathways leading to NF-kappa-B activation. Plays a role in the regulation of DNA repair after double-stranded DNA breaks. Acts as a chromatin regulator via its association with the Polycomb group (PcG) multiprotein PRC1-like complex; may act by deubiquitinating components of the PRC1-like complex. Promotes cell proliferation by deubiquitinating phosphorylated E2F1. This Canis lupus familiaris (Dog) protein is Ubiquitin carboxyl-terminal hydrolase 11 (USP11).